The primary structure comprises 181 residues: CAPA peptides (181 aa).

An N-terminal signal peptide occupies residues 1 to 22; it reads MQDNRFFILMILLVFSTSLNQG. Positions 23–29 are excised as a propeptide; the sequence is QKLKAND. Residue Ile41 is modified to Isoleucine amide. A propeptide spanning residues 44-54 is cleaved from the precursor; the sequence is NSEISSFSRSE. Ile65 is modified (isoleucine amide). Residues 68-181 constitute a propeptide that is removed on maturation; sequence SDVSSFDNLN…ENERDTANFL (114 aa). A disordered region spans residues 159–181; that stretch reads TQGQGGYTPRLGRENERDTANFL. Basic and acidic residues predominate over residues 169-181; that stretch reads LGRENERDTANFL.

A pyrokinin potentially constituted by residues Asn-158 to Gly-170 has so far not been detected and might be completely absent in ants. Periviscerokinin 1 and 2 are expressed in central brain, antennal lobes and gnathal, thoracic and abominal ganglia. Periviscerokinin 2 is also expressed in the retrocerebral complex (at protein level).

It localises to the secreted. In terms of biological role, periviscerokinins mediate visceral muscle contractile activity (myotropic activity). This is CAPA peptides from Camponotus floridanus (Florida carpenter ant).